We begin with the raw amino-acid sequence, 316 residues long: Ribosomal RNA small subunit methyltransferase H (316 aa).

Residues 35–37 (AGH), Asp55, Phe84, Asp105, and Gln112 contribute to the S-adenosyl-L-methionine site.

The protein belongs to the methyltransferase superfamily. RsmH family.

The protein localises to the cytoplasm. It catalyses the reaction cytidine(1402) in 16S rRNA + S-adenosyl-L-methionine = N(4)-methylcytidine(1402) in 16S rRNA + S-adenosyl-L-homocysteine + H(+). Specifically methylates the N4 position of cytidine in position 1402 (C1402) of 16S rRNA. This is Ribosomal RNA small subunit methyltransferase H from Streptococcus mutans serotype c (strain ATCC 700610 / UA159).